Consider the following 2198-residue polypeptide: Activating signal cointegrator 1 complex subunit 3 (2198 aa).

Ser-12 is modified (phosphoserine). Coiled-coil stretches lie at residues 18–81 and 328–356; these read KQDN…KQIV and IQSEQEKQLMKQYRREEKRIARREKKAGE. A Helicase ATP-binding 1 domain is found at 487-670; it reads ETAYNTNENM…FLHVNPYIGL (184 aa). 500–507 is a binding site for ATP; that stretch reads APTGAGKT. Lys-573 bears the N6-acetyllysine mark. The DEVH box motif lies at 612–615; it reads DEVH. Residues 697–915 form the Helicase C-terminal 1 domain; that stretch reads QLNNMDEVCY…GTVTNVEEAV (219 aa). Residues 979-1288 enclose the SEC63 1 domain; sequence STDLGRTASH…GAEAVCIINF (310 aa). The Helicase ATP-binding 2 domain occupies 1337–1512; that stretch reads HTLYHTDCNV…WLNIKQMGLF (176 aa). 1350-1357 contacts ATP; that stretch reads APTGSGKT. The short motif at 1454–1457 is the DEIH box element; sequence DEIH. The Helicase C-terminal 2 domain occupies 1545–1740; it reads PAFQAIRSHS…VLSDHLNAEI (196 aa). An SEC63 2 domain is found at 1813-2177; sequence PLTCGRIASY…LGLDQQYDIY (365 aa).

It belongs to the helicase family. In terms of assembly, identified in the ASCC complex that contains ASCC1, ASCC2 and ASCC3. Functions as a scaffolding subunit that interacts directly with both ASCC1 and ASCC2. Interacts directly with ALKBH3, and thereby recruits ALKBH3 to the ASCC complex. Part of the ASC-1/TRIP4 complex, that contains TRIP4, ASCC1, ASCC2 and ASCC3. Part of the RQT (ribosome quality control trigger) complex, that contains ASCC2, ASCC3 and TRIP4. Associates with ribosomes; recruited to collided ribosomes. Interacts with ZCCHC4. Interacts with ZNF598. Interacts with RPS3.

The protein localises to the nucleus. The protein resides in the nucleus speckle. It is found in the cytoplasm. Its subcellular location is the cytosol. The catalysed reaction is Couples ATP hydrolysis with the unwinding of duplex DNA by translocating in the 3'-5' direction.. It carries out the reaction ATP + H2O = ADP + phosphate + H(+). ATPase involved both in DNA repair and rescue of stalled ribosomes. 3'-5' DNA helicase involved in repair of alkylated DNA: promotes DNA unwinding to generate single-stranded substrate needed for ALKBH3, enabling ALKBH3 to process alkylated N3-methylcytosine (3mC) within double-stranded regions. Also involved in activation of the ribosome quality control (RQC) pathway, a pathway that degrades nascent peptide chains during problematic translation. Drives the splitting of stalled ribosomes that are ubiquitinated in a ZNF598-dependent manner, as part of the ribosome quality control trigger (RQT) complex. Part of the ASC-1 complex that enhances NF-kappa-B, SRF and AP1 transactivation. The protein is Activating signal cointegrator 1 complex subunit 3 (Ascc3) of Mus musculus (Mouse).